Consider the following 490-residue polypeptide: Probable cytochrome P450 518B1 (490 aa).

A helical transmembrane segment spans residues 2–22 (LTNIIILIILYLFYDFCYKNF). Cysteine 437 provides a ligand contact to heme.

This sequence belongs to the cytochrome P450 family. Heme serves as cofactor.

It is found in the membrane. This chain is Probable cytochrome P450 518B1 (cyp518B1), found in Dictyostelium discoideum (Social amoeba).